The primary structure comprises 467 residues: UDP-N-acetylmuramoylalanine--D-glutamate ligase (467 aa).

121–127 provides a ligand contact to ATP; the sequence is GTNGKST.

This sequence belongs to the MurCDEF family.

The protein localises to the cytoplasm. The enzyme catalyses UDP-N-acetyl-alpha-D-muramoyl-L-alanine + D-glutamate + ATP = UDP-N-acetyl-alpha-D-muramoyl-L-alanyl-D-glutamate + ADP + phosphate + H(+). It participates in cell wall biogenesis; peptidoglycan biosynthesis. In terms of biological role, cell wall formation. Catalyzes the addition of glutamate to the nucleotide precursor UDP-N-acetylmuramoyl-L-alanine (UMA). This is UDP-N-acetylmuramoylalanine--D-glutamate ligase from Brucella abortus (strain 2308).